The following is a 557-amino-acid chain: Intraflagellar transport protein 56 (557 aa).

The tract at residues 1–30 (MLLSRMKPAVGGEASTSSNEKKRKNKSKKI) is disordered. The segment covering 21–30 (KKRKNKSKKI) has biased composition (basic residues). TPR repeat units follow at residues 60 to 93 (EHAD…PDCP), 95 to 128 (DVWV…LQNR), 154 to 187 (TEDQ…NREF), and 471 to 504 (ANDC…EGKR).

It belongs to the IFT56 family. Component of the IFT complex B.

Its subcellular location is the cell projection. It is found in the cilium. Functionally, component of the intraflagellar transport (IFT) complex B required for transport of proteins in the motile cilium. Required for transport of specific ciliary cargo proteins related to motility, while it is neither required for IFT complex B assembly or motion nor for cilium assembly. Plays a key role in maintaining the integrity of the IFT complex B and the proper ciliary localization of the IFT complex B components. Essential for maintaining proper microtubule organization within the ciliary axoneme. The sequence is that of Intraflagellar transport protein 56 from Danio rerio (Zebrafish).